Reading from the N-terminus, the 780-residue chain is Probable trehalase (780 aa).

Residues 1–48 (MVDFLPKVTEINPPSEGNDGEDNIKPLSSGSEQRPLKEEGQQGGRRHH) are disordered. Residues serine 52 and serine 53 each carry the phosphoserine modification. Threonine 88 bears the Phosphothreonine mark. A Phosphoserine modification is found at serine 112. Residues arginine 331, 338-339 (WD), asparagine 375, arginine 384, 384-386 (RSQ), and glycine 505 contribute to the substrate site. Catalysis depends on proton donor/acceptor residues aspartate 507 and glutamate 703.

This sequence belongs to the glycosyl hydrolase 37 family.

The enzyme catalyses alpha,alpha-trehalose + H2O = alpha-D-glucose + beta-D-glucose. This chain is Probable trehalase (NTH2), found in Saccharomyces cerevisiae (strain ATCC 204508 / S288c) (Baker's yeast).